The primary structure comprises 194 residues: Interferon alpha (194 aa).

The first 23 residues, Met-1–Gly-23, serve as a signal peptide directing secretion. 2 cysteine pairs are disulfide-bonded: Cys-24/Cys-123 and Cys-52/Cys-166. The N-linked (GlcNAc...) asparagine glycan is linked to Asn-102.

The protein belongs to the alpha/beta interferon family.

The protein localises to the secreted. Functionally, produced by macrophages, IFN-alpha have antiviral activities. Interferon stimulates the production of two enzymes: a protein kinase and an oligoadenylate synthetase. This Felis catus (Cat) protein is Interferon alpha.